Reading from the N-terminus, the 141-residue chain is Neuropeptides CP2 (141 aa).

Residues 1–26 (MDSRICTSFARLMASALCVSTLLVTA) form the signal peptide. The tract at residues 75–94 (KVDMPLPRQRTSSRSSERWA) is disordered. At H140 the chain carries Histidine amide.

In terms of tissue distribution, neurons.

It is found in the secreted. In terms of biological role, mediates intrinsic neuromodulation. The sequence is that of Neuropeptides CP2 (CP2PP) from Aplysia californica (California sea hare).